Here is a 364-residue protein sequence, read N- to C-terminus: Serpentine receptor class epsilon-27 (364 aa).

Helical transmembrane passes span 31–51, 64–84, 125–145, 167–187, 195–215, 257–277, and 290–310; these read VIAS…VVSL, FIIL…GKLI, LLII…FGAV, IFIP…CSCL, IITI…VFFL, LIFS…TLLL, and NALF…IPAW.

This sequence belongs to the nematode receptor-like protein sre family.

It localises to the membrane. This is Serpentine receptor class epsilon-27 (sre-27) from Caenorhabditis elegans.